Consider the following 414-residue polypeptide: MSNKTKLKDNKELLYQVVLSYKVSHNYPLKAFLIECKNKLNECIDMIWNNIKYTKKDNPKLPKSNEFKRELRNKLLENWNYASHYIDGIIKTSYSILQSWASNYKRGYRTKTKPIAKRLFVRVKTTLIKYDKEKGEIRITIKPRKDYLILNIKNEWFFDKVKNLTIGEIILKEKETFLTFKDNLNYSDKGMIVGVDSNLRSLDLFHPIEGWTRVDLTELHRIKEVYDRKIDFLKKLLKKFPLRAMRKINRLFERRRNRVKDFLHKLTIQLSRLFPDAIFVFEDLNKRRMYKSKYFNRKIDRVNWNGLIEKISYKTIVILVNPAYTSTICPICGSRMESQEGQVVYCSNCLNSFNRQLVGCYNIFKRGLGNIKEIMGGSGVTTTGVEVSFGKLMTPNPNVIYIVDYNGKYFNEIA.

Residues cysteine 329, cysteine 332, cysteine 346, and cysteine 349 each coordinate Zn(2+).

It in the N-terminal section; belongs to the transposase 2 family. This sequence in the C-terminal section; belongs to the transposase 35 family.

This chain is TnpB-like protein MJ1635, found in Methanocaldococcus jannaschii (strain ATCC 43067 / DSM 2661 / JAL-1 / JCM 10045 / NBRC 100440) (Methanococcus jannaschii).